A 150-amino-acid chain; its full sequence is NADH-quinone oxidoreductase subunit A (150 aa).

The next 3 helical transmembrane spans lie at 14–34 (FAVF…GAFF), 66–86 (FYLV…LYAW), and 96–116 (IGFI…VYLV).

It belongs to the complex I subunit 3 family. As to quaternary structure, NDH-1 is composed of 13 different subunits. Subunits NuoA, H, J, K, L, M, N constitute the membrane sector of the complex.

It is found in the cell inner membrane. The catalysed reaction is a quinone + NADH + 5 H(+)(in) = a quinol + NAD(+) + 4 H(+)(out). NDH-1 shuttles electrons from NADH, via FMN and iron-sulfur (Fe-S) centers, to quinones in the respiratory chain. The immediate electron acceptor for the enzyme in this species is believed to be ubiquinone. Couples the redox reaction to proton translocation (for every two electrons transferred, four hydrogen ions are translocated across the cytoplasmic membrane), and thus conserves the redox energy in a proton gradient. This Yersinia enterocolitica serotype O:8 / biotype 1B (strain NCTC 13174 / 8081) protein is NADH-quinone oxidoreductase subunit A.